A 270-amino-acid polypeptide reads, in one-letter code: 2-dehydro-3-deoxyphosphooctonate aldolase (270 aa).

Belongs to the KdsA family.

The protein resides in the cytoplasm. It carries out the reaction D-arabinose 5-phosphate + phosphoenolpyruvate + H2O = 3-deoxy-alpha-D-manno-2-octulosonate-8-phosphate + phosphate. It functions in the pathway carbohydrate biosynthesis; 3-deoxy-D-manno-octulosonate biosynthesis; 3-deoxy-D-manno-octulosonate from D-ribulose 5-phosphate: step 2/3. It participates in bacterial outer membrane biogenesis; lipopolysaccharide biosynthesis. The chain is 2-dehydro-3-deoxyphosphooctonate aldolase from Helicobacter hepaticus (strain ATCC 51449 / 3B1).